The following is a 342-amino-acid chain: MEPNNSFRVDSEFRYTLFPIFYSIVFVLGVIANSYVLWVFARLYPSKKFNEIKIFMVNLTMADLLFLVTLPLWIVYYYNQGDWILPKFLCNLAGCFFFINTYCSVAFLAVITYNRFQAVTRPIKTAQATTRKRGFLLSLIIWVSIVGAASYFFVLDSTNSEPKKTGSGNITRCFEHYEKGSIPVLIIHIFLVFSFFLVFLIILFCNLVIIRTLLTQQVQMQRNAEVKRRALWMVCTVLAVFVICFVPHHLVQLPWTLAELGFQDTDFHQGINDAHQVTLCLLSTNCVLDPIIYCFLTKKFRKHLTEKLYSMRESRKCSRATSETGTEVVVQLKDAPIKSLKY.

The Extracellular segment spans residues 1–16; the sequence is MEPNNSFRVDSEFRYT. Asparagine 4 carries an N-linked (GlcNAc...) asparagine glycan. A helical transmembrane segment spans residues 17-38; the sequence is LFPIFYSIVFVLGVIANSYVLW. The Cytoplasmic segment spans residues 39 to 54; sequence VFARLYPSKKFNEIKI. Residues 55 to 74 form a helical membrane-spanning segment; the sequence is FMVNLTMADLLFLVTLPLWI. Residues 75–91 are Extracellular-facing; the sequence is VYYYNQGDWILPKFLCN. A disulfide bridge links cysteine 90 with cysteine 173. The helical transmembrane segment at 92 to 113 threads the bilayer; that stretch reads LAGCFFFINTYCSVAFLAVITY. Residues 114–133 lie on the Cytoplasmic side of the membrane; sequence NRFQAVTRPIKTAQATTRKR. A helical membrane pass occupies residues 134–155; sequence GFLLSLIIWVSIVGAASYFFVL. The Extracellular segment spans residues 156 to 184; it reads DSTNSEPKKTGSGNITRCFEHYEKGSIPV. N-linked (GlcNAc...) asparagine glycosylation is present at asparagine 169. The helical transmembrane segment at 185-205 threads the bilayer; that stretch reads LIIHIFLVFSFFLVFLIILFC. Residues 206–233 are Cytoplasmic-facing; sequence NLVIIRTLLTQQVQMQRNAEVKRRALWM. A helical transmembrane segment spans residues 234–254; the sequence is VCTVLAVFVICFVPHHLVQLP. Topologically, residues 255-276 are extracellular; it reads WTLAELGFQDTDFHQGINDAHQ. A helical membrane pass occupies residues 277 to 296; the sequence is VTLCLLSTNCVLDPIIYCFL. Residues 297 to 342 are Cytoplasmic-facing; that stretch reads TKKFRKHLTEKLYSMRESRKCSRATSETGTEVVVQLKDAPIKSLKY.

This sequence belongs to the G-protein coupled receptor 1 family. In terms of assembly, interacts with ARRB1.

The protein resides in the cell membrane. Receptor for platelet activating factor, a chemotactic phospholipid mediator that possesses potent inflammatory, smooth-muscle contractile and hypotensive activity. Seems to mediate its action via a G protein that activates a phosphatidylinositol-calcium second messenger system. The sequence is that of Platelet-activating factor receptor from Capra hircus (Goat).